The primary structure comprises 974 residues: Ovochymase-2 (974 aa).

Residues 1-21 (MAETSIFPIMMLTVMIGVGRG) form the signal peptide. A propeptide spans 22–49 (VTDSPGRVSRCGERPAANTSVSYGLLSR) (activation peptide). A glycan (N-linked (GlcNAc...) asparagine) is linked at N39. In terms of domain architecture, Peptidase S1 1 spans 50 to 299 (IVGGTSAVKG…LLNWLSENLN (250 aa)). Residues C75 and C91 are joined by a disulfide bond. H90 functions as the Charge relay system in the catalytic mechanism. Residues V112 and E117 each contribute to the Ca(2+) site. D140 serves as the catalytic Charge relay system. 11 cysteine pairs are disulfide-bonded: C174–C244, C205–C223, C234–C263, C312–C342, C369–C388, C435–C462, C489–C510, C615–C631, C713–C776, C741–C754, and C766–C795. The active-site Charge relay system is the S238. 2 CUB domains span residues 312-425 (CSTN…YEAV) and 435-547 (CGSV…ISFV). The 230-residue stretch at 590–819 (LIKAEEAMPN…FIPWIMETIL (230 aa)) folds into the Peptidase S1 2 domain. Residues 590–974 (LIKAEEAMPN…WLSYSFHNQN (385 aa)) constitute a propeptide, activation peptide. The N-linked (GlcNAc...) asparagine glycan is linked to N763. A disordered region spans residues 830–858 (EPHHPLFPPDKPSQQKALLPDSPPSSSSQ). The N-linked (GlcNAc...) asparagine glycan is linked to N926.

The protein belongs to the peptidase S1 family. Post-translationally, the catalytically inactive 107 kDa form is processed both N- and C-terminally to give rise to the 66 kDa catalytically active form and inactive forms of 82 kDa and 59 kDa. As to expression, expressed specifically in the cells lining the bottom of epithelial folds in the oviductal pars recta.

The protein resides in the secreted. It catalyses the reaction Preferential cleavage at 371-Gly-Ser-Arg-|-Trp-374 of glycoprotein gp43 in Xenopus laevis coelemic egg envelope to yield gp41.. Its function is as follows. Mediates gamete interaction by affecting the vitelline coat. This is Ovochymase-2 (OVCH2) from Bufo japonicus (Japanese common toad).